Reading from the N-terminus, the 102-residue chain is Large ribosomal subunit protein bL21 (102 aa).

Belongs to the bacterial ribosomal protein bL21 family. Part of the 50S ribosomal subunit. Contacts protein L20.

Its function is as follows. This protein binds to 23S rRNA in the presence of protein L20. In Ligilactobacillus salivarius (strain UCC118) (Lactobacillus salivarius), this protein is Large ribosomal subunit protein bL21.